Consider the following 240-residue polypeptide: Aquaporin SIP1-1 (240 aa).

The next 2 helical transmembrane spans lie at 13–33 and 44–64; these read LMTF…AAII and APLV…TVIF. The short motif at 70-72 is the NPA 1 element; the sequence is NPT. Helical transmembrane passes span 89-109, 132-152, and 163-183; these read SLAI…LAIM, GAIA…LIIL, and FLLA…TGPA. An NPA 2 motif is present at residues 185-187; it reads NPA. A helical membrane pass occupies residues 203–223; it reads DHIYVYWISSFVGALSAALLF.

Belongs to the MIP/aquaporin (TC 1.A.8) family. SIP (TC 1.A.8.10) subfamily. Expressed in roots and above ground. Expressed in elongating regions of the root tips, trichome cells of the rosette leaves, vascular tissues of the flower petals, stigma, stamens (anthers and filaments), pollen and the top and bottom (receptacle) of siliques.

The protein resides in the endoplasmic reticulum membrane. Its function is as follows. Water channel required to facilitate the transport of water across cell membrane. The polypeptide is Aquaporin SIP1-1 (SIP1-1) (Arabidopsis thaliana (Mouse-ear cress)).